Consider the following 122-residue polypeptide: MIQSQTQLNVADNSGARKIMCIRIIGSSNRRYAHIGDIIVAVIKDAVPNMTLEKSEVVRAVIVRTRKELKRDNGIILRYDDNAAVIIDKEGNPKGTRIFGAIPRELRKLNFNKIVSLAPEVL.

This sequence belongs to the universal ribosomal protein uL14 family. In terms of assembly, part of the 50S ribosomal subunit.

The protein localises to the plastid. In terms of biological role, binds to 23S rRNA. This is Large ribosomal subunit protein uL14c from Cuscuta gronovii (Common dodder).